Consider the following 306-residue polypeptide: HORMA domain-containing protein 2 (306 aa).

One can recognise an HORMA domain in the interval 29-232; it reads HESLIMVKKL…TGFHSMKVKV (204 aa).

Interacts with HORMAD1. In terms of processing, phosphorylated in a SPO11-dependent manner.

Its subcellular location is the nucleus. The protein localises to the chromosome. In terms of biological role, essential for synapsis surveillance during meiotic prophase via the recruitment of ATR activity. Plays a key role in the male mid-pachytene checkpoint and the female meiotic prophase checkpoint: required for efficient build-up of ATR activity on unsynapsed chromosome regions, a process believed to form the basis of meiotic silencing of unsynapsed chromatin (MSUC) and meiotic prophase quality control in both sexes. Required for the DNA double-strand break-independent, BRCA1-dependent activation of ATR on the sex chromosomes that is essential for normal sex body formation. The sequence is that of HORMA domain-containing protein 2 (HORMAD2) from Bos taurus (Bovine).